The chain runs to 198 residues: Urease accessory protein UreE (198 aa).

The interval 137–198 (ARGAYHSPGG…RGHDHDHKHD (62 aa)) is disordered. The span at 149-198 (HGHDHDHNHDHGHDHAHDHNHGHDHDHEHGYEHEHEHRHDRGHDHDHKHD) shows a compositional bias: basic and acidic residues.

It belongs to the UreE family.

It is found in the cytoplasm. Its function is as follows. Involved in urease metallocenter assembly. Binds nickel. Probably functions as a nickel donor during metallocenter assembly. The protein is Urease accessory protein UreE of Rhizobium johnstonii (strain DSM 114642 / LMG 32736 / 3841) (Rhizobium leguminosarum bv. viciae).